Here is a 262-residue protein sequence, read N- to C-terminus: Small ribosomal subunit protein eS1y (262 aa).

Residues Met1–Lys18 are compositionally biased toward basic residues. The segment at Met1 to Val21 is disordered.

It belongs to the eukaryotic ribosomal protein eS1 family. Component of the small ribosomal subunit. Mature ribosomes consist of a small (40S) and a large (60S) subunit. The 40S subunit contains about 33 different proteins and 1 molecule of RNA (18S). The 60S subunit contains about 49 different proteins and 3 molecules of RNA (25S, 5.8S and 5S).

Its subcellular location is the cytoplasm. The polypeptide is Small ribosomal subunit protein eS1y (Arabidopsis thaliana (Mouse-ear cress)).